The following is a 166-amino-acid chain: MSSAIDTKKVVVEEIASKLKESKSTIIVDYRGLNVSEVTELRKQLREANVEFKVYKNTMTRRAVEQAELDGLNDVLTGPNAIAFSTEDVIAPAKVLNEFAKNHEALEIKAGVIEGKVSSVEEVKALAELPSRDGLLSMLLSVLQAPVRNLALAAKAVADQKEEQGA.

It belongs to the universal ribosomal protein uL10 family. As to quaternary structure, part of the ribosomal stalk of the 50S ribosomal subunit. The N-terminus interacts with L11 and the large rRNA to form the base of the stalk. The C-terminus forms an elongated spine to which L12 dimers bind in a sequential fashion forming a multimeric L10(L12)X complex.

Its function is as follows. Forms part of the ribosomal stalk, playing a central role in the interaction of the ribosome with GTP-bound translation factors. The polypeptide is Large ribosomal subunit protein uL10 (Bacillus velezensis (strain DSM 23117 / BGSC 10A6 / LMG 26770 / FZB42) (Bacillus amyloliquefaciens subsp. plantarum)).